The sequence spans 256 residues: Probable fructose-2,6-bisphosphatase TIGAR A (256 aa).

His11 (tele-phosphohistidine intermediate) is an active-site residue. Glu89 (proton donor/acceptor) is an active-site residue. Residues 147–170 (HQDKVQDGGTSSADESTEAPAGLA) are disordered.

The protein belongs to the phosphoglycerate mutase family.

Its subcellular location is the cytoplasm. It is found in the nucleus. The protein localises to the mitochondrion. The catalysed reaction is beta-D-fructose 2,6-bisphosphate + H2O = beta-D-fructose 6-phosphate + phosphate. Fructose-bisphosphatase hydrolyzing fructose-2,6-bisphosphate as well as fructose-1,6-bisphosphate. Acts as a negative regulator of glycolysis by lowering intracellular levels of fructose-2,6-bisphosphate in a p53/TP53-dependent manner, resulting in the pentose phosphate pathway (PPP) activation and NADPH production. Contributes to the generation of reduced glutathione to cause a decrease in intracellular reactive oxygen species (ROS) content, correlating with its ability to protect cells from oxidative or metabolic stress-induced cell death. May play a role in mitophagy inhibition. The sequence is that of Probable fructose-2,6-bisphosphatase TIGAR A from Danio rerio (Zebrafish).